A 397-amino-acid polypeptide reads, in one-letter code: CCA-adding enzyme (397 aa).

ATP is bound by residues G32 and R35. 2 residues coordinate CTP: G32 and R35. Mg(2+)-binding residues include D45 and D47. ATP contacts are provided by R116, D159, R162, R165, and R168. CTP is bound by residues R116, D159, R162, R165, and R168.

The protein belongs to the tRNA nucleotidyltransferase/poly(A) polymerase family. Bacterial CCA-adding enzyme type 3 subfamily. As to quaternary structure, homodimer. Mg(2+) serves as cofactor.

It catalyses the reaction a tRNA precursor + 2 CTP + ATP = a tRNA with a 3' CCA end + 3 diphosphate. The catalysed reaction is a tRNA with a 3' CCA end + 2 CTP + ATP = a tRNA with a 3' CCACCA end + 3 diphosphate. In terms of biological role, catalyzes the addition and repair of the essential 3'-terminal CCA sequence in tRNAs without using a nucleic acid template. Adds these three nucleotides in the order of C, C, and A to the tRNA nucleotide-73, using CTP and ATP as substrates and producing inorganic pyrophosphate. tRNA 3'-terminal CCA addition is required both for tRNA processing and repair. Also involved in tRNA surveillance by mediating tandem CCA addition to generate a CCACCA at the 3' terminus of unstable tRNAs. While stable tRNAs receive only 3'-terminal CCA, unstable tRNAs are marked with CCACCA and rapidly degraded. The protein is CCA-adding enzyme of Levilactobacillus brevis (strain ATCC 367 / BCRC 12310 / CIP 105137 / JCM 1170 / LMG 11437 / NCIMB 947 / NCTC 947) (Lactobacillus brevis).